The following is a 29-amino-acid chain: Acidic phospholipase A2 Omo-E6 (29 aa).

Ca(2+) contacts are provided by tyrosine 27 and glycine 29.

Requires Ca(2+) as cofactor. In terms of tissue distribution, expressed by the venom gland.

The protein resides in the secreted. It catalyses the reaction a 1,2-diacyl-sn-glycero-3-phosphocholine + H2O = a 1-acyl-sn-glycero-3-phosphocholine + a fatty acid + H(+). Its function is as follows. Snake venom phospholipase A2 (PLA2) that inhibits the ADP- and collagen-induced human platelet aggregation. Exhibits strong hydrolytic activities and prefers the anionic micelles (dPPC with deoxycholate) to the zwitterionic micelles (dPPC with Triton X-100). PLA2 catalyzes the calcium-dependent hydrolysis of the 2-acyl groups in 3-sn-phosphoglycerides. In Ovophis monticola (Chinese mountain pitviper), this protein is Acidic phospholipase A2 Omo-E6.